Consider the following 74-residue polypeptide: Putative defensin-like protein 27 (74 aa).

Residues Met1–Ala19 form the signal peptide. 4 cysteine pairs are disulfide-bonded: Cys36/Cys74, Cys46/Cys65, Cys51/Cys70, and Cys55/Cys72.

Belongs to the DEFL family.

Its subcellular location is the secreted. The polypeptide is Putative defensin-like protein 27 (Arabidopsis thaliana (Mouse-ear cress)).